The primary structure comprises 91 residues: HssA/B-like protein 24 (91 aa).

Belongs to the hssA/B family.

The polypeptide is HssA/B-like protein 24 (hssl24) (Dictyostelium discoideum (Social amoeba)).